We begin with the raw amino-acid sequence, 313 residues long: Ribosomal RNA small subunit methyltransferase H (313 aa).

S-adenosyl-L-methionine-binding positions include 35–37, aspartate 55, phenylalanine 80, aspartate 102, and glutamine 109; that span reads GGH.

The protein belongs to the methyltransferase superfamily. RsmH family.

The protein localises to the cytoplasm. It catalyses the reaction cytidine(1402) in 16S rRNA + S-adenosyl-L-methionine = N(4)-methylcytidine(1402) in 16S rRNA + S-adenosyl-L-homocysteine + H(+). Functionally, specifically methylates the N4 position of cytidine in position 1402 (C1402) of 16S rRNA. The chain is Ribosomal RNA small subunit methyltransferase H from Shewanella sp. (strain MR-7).